The primary structure comprises 31 residues: GNCLELGEYCDGSKDDCQCCRDNAYCGCDIF.

Post-translationally, disulfide bonds are present. As to expression, expressed by the venom gland.

The protein resides in the secreted. Its function is as follows. Omega-agatoxins are antagonists of voltage-gated calcium channels (Cav). The protein is U14-ctenitoxin-Co1a of Ctenus ornatus (Brazilian spider).